The primary structure comprises 380 residues: MKLHEYQAKGVFADAGIPVPESTLASTVDEAVEAADDIGYPVAIKAQVQVGGRGKAGGIKLVENADEAREAADEILGMDLKGLHVDRVLVEAAVDFTDELYVGVTMDRAAGKPVAMVSTRGGVNIEEVAEEDPDAIVREHIDPAFGMHPFQARKAAFEAGVDRAVANDVASILTQLYELWADKDATEIEVNPLMVTDDDEVIAADAVMNIDEDALFRHPDLEEMEEEAAGDELEAKANEYGFDYVRLSGNTGIIGNGAGLVMTTLDLVDHYGGEPANFLDIGGGAKAERVANALDMVFSDDNVDSVVFNIFGGITRGDEVAKGINEALEQFDEIPKPVVVRLAGTNAEEGMEILNTDLVTVEKTLEDAVQRAVKYAEEEQ.

The ATP-grasp domain maps to 9-236 (KGVFADAGIP…EAAGDELEAK (228 aa)). Residues K45, 52 to 54 (GRG), E91, V94, and E99 contribute to the ATP site. Mg(2+)-binding residues include N191 and D205. Substrate contacts are provided by residues N256 and 313 to 315 (GIT).

Belongs to the succinate/malate CoA ligase beta subunit family. In terms of assembly, heterotetramer of two alpha and two beta subunits. It depends on Mg(2+) as a cofactor.

The catalysed reaction is succinate + ATP + CoA = succinyl-CoA + ADP + phosphate. It catalyses the reaction GTP + succinate + CoA = succinyl-CoA + GDP + phosphate. It functions in the pathway carbohydrate metabolism; tricarboxylic acid cycle; succinate from succinyl-CoA (ligase route): step 1/1. In terms of biological role, succinyl-CoA synthetase functions in the citric acid cycle (TCA), coupling the hydrolysis of succinyl-CoA to the synthesis of either ATP or GTP and thus represents the only step of substrate-level phosphorylation in the TCA. The beta subunit provides nucleotide specificity of the enzyme and binds the substrate succinate, while the binding sites for coenzyme A and phosphate are found in the alpha subunit. This is Succinate--CoA ligase [ADP-forming] subunit beta from Natronomonas pharaonis (strain ATCC 35678 / DSM 2160 / CIP 103997 / JCM 8858 / NBRC 14720 / NCIMB 2260 / Gabara) (Halobacterium pharaonis).